Here is a 187-residue protein sequence, read N- to C-terminus: Rusticyanin (187 aa).

The signal sequence occupies residues 1–32; that stretch reads MYTQNTMKKNWYVTVGAAAALAATVGMGTAMA. One can recognise a Plastocyanin-like domain in the interval 85–187; the sequence is SFEVHDKKNP…TGMFGKIVVK (103 aa). Cu cation is bound by residues histidine 117, cysteine 170, histidine 175, and methionine 180.

As to quaternary structure, monomer. Requires Cu cation as cofactor.

The protein localises to the periplasm. Its function is as follows. Electron carrier from cytochrome c552 to the A-type oxidase. This chain is Rusticyanin (rus), found in Acidithiobacillus ferrooxidans (strain ATCC 23270 / DSM 14882 / CIP 104768 / NCIMB 8455) (Ferrobacillus ferrooxidans (strain ATCC 23270)).